The primary structure comprises 444 residues: Viral protein kinase (444 aa).

Residues 1 to 25 (MRWKRMERRPPLTPLRRSRTQSSGG) form a disordered region. ATP-binding positions include 90-98 (LGRGAFGII) and lysine 108. The active-site Proton acceptor is the aspartate 201.

In terms of assembly, interacts with protein K-bZIP/K8. Interacts with host beta-catenin/CTNNB1. Post-translationally, AUtophosphorylated.

It localises to the host nucleus. The enzyme catalyses L-seryl-[protein] + ATP = O-phospho-L-seryl-[protein] + ADP + H(+). It catalyses the reaction L-threonyl-[protein] + ATP = O-phospho-L-threonyl-[protein] + ADP + H(+). In terms of biological role, serine/threonine protein kinase that plays a role in viral gene expression, viral DNA replication and encapsidation, and nuclear egress of virions. Regulates host transcriptional activity through interactions with RNA helicase and c-Jun N-terminal kinase (JNK) and viral transcriptional activity through interactions with the viral protein K-bZIP/K8. Induces host chromosome condensation and phosphorylation of histone H3. Phosphorylates the DNA polymerase processivity factor hence modulating its processivity function. Inhibits the host Wnt signaling pathway via direct interactions with beta-catenin/CTNNB1 while the kinase activity of vPK is not required for this inhibitory activity. Also phosphorylates host SAMHD1 and thereby counteracts its antiviral effect by reducing its dNTP hydrolase activity. The protein is Viral protein kinase (vPK) of Human herpesvirus 8 type P (isolate GK18) (HHV-8).